Here is a 401-residue protein sequence, read N- to C-terminus: 8-amino-7-oxononanoate synthase (401 aa).

R24 is a substrate binding site. 111 to 112 (GF) contributes to the pyridoxal 5'-phosphate binding site. H137 provides a ligand contact to substrate. Pyridoxal 5'-phosphate-binding residues include S183, H211, and T240. K243 is subject to N6-(pyridoxal phosphate)lysine. T357 lines the substrate pocket.

This sequence belongs to the class-II pyridoxal-phosphate-dependent aminotransferase family. BioF subfamily. In terms of assembly, homodimer. The cofactor is pyridoxal 5'-phosphate.

It catalyses the reaction 6-carboxyhexanoyl-[ACP] + L-alanine + H(+) = (8S)-8-amino-7-oxononanoate + holo-[ACP] + CO2. Its pathway is cofactor biosynthesis; biotin biosynthesis. In terms of biological role, catalyzes the decarboxylative condensation of pimeloyl-[acyl-carrier protein] and L-alanine to produce 8-amino-7-oxononanoate (AON), [acyl-carrier protein], and carbon dioxide. This Xanthomonas campestris pv. campestris (strain B100) protein is 8-amino-7-oxononanoate synthase.